The following is a 139-amino-acid chain: ATP synthase epsilon chain (139 aa).

It belongs to the ATPase epsilon chain family. In terms of assembly, F-type ATPases have 2 components, CF(1) - the catalytic core - and CF(0) - the membrane proton channel. CF(1) has five subunits: alpha(3), beta(3), gamma(1), delta(1), epsilon(1). CF(0) has three main subunits: a, b and c.

The protein resides in the cell inner membrane. Produces ATP from ADP in the presence of a proton gradient across the membrane. In Pseudomonas putida (strain ATCC 700007 / DSM 6899 / JCM 31910 / BCRC 17059 / LMG 24140 / F1), this protein is ATP synthase epsilon chain.